Consider the following 164-residue polypeptide: Interleukin-36 beta (164 aa).

The propeptide occupies 1-4; that stretch reads MNPQ.

The protein belongs to the IL-1 family. Interacts with cargo receptor TMED10; the interaction mediates the translocation from the cytoplasm into the ERGIC (endoplasmic reticulum-Golgi intermediate compartment) and thereby secretion. In terms of processing, N-terminal truncation leads to a dramatic enhancement of its activity (&gt;1000-fold). In terms of tissue distribution, expression at low levels in tonsil, bone marrow, heart, placenta, lung, testis and colon but not in any hematopoietic cell lines. Not detected in adipose tissue. Expressed at higher levels in psoriatic plaques than in symptomless psoriatic skin or healthy control skin. Increased levels are not detected in inflamed joint tissue.

It localises to the cytoplasm. The protein resides in the secreted. Its function is as follows. Cytokine that binds to and signals through the IL1RL2/IL-36R receptor which in turn activates NF-kappa-B and MAPK signaling pathways in target cells linked to a pro-inflammatory response. Part of the IL-36 signaling system that is thought to be present in epithelial barriers and to take part in local inflammatory response; similar to the IL-1 system with which it shares the coreceptor IL1RAP. Stimulates production of interleukin-6 and interleukin-8 in synovial fibrobasts, articular chondrocytes and mature adipocytes. Induces expression of a number of antimicrobial peptides including beta-defensins 4 and 103 as well as a number of matrix metalloproteases. Seems to be involved in skin inflammatory response by acting on keratinocytes, dendritic cells and indirectly on T-cells to drive tissue infiltration, cell maturation and cell proliferation. In cultured keratinocytes induces the expression of macrophage, T-cell, and neutrophil chemokines, such as CCL3, CCL4, CCL5, CCL2, CCL17, CCL22, CL20, CCL5, CCL2, CCL17, CCL22, CXCL8, CCL20 and CXCL1, and the production of pro-inflammatory cytokines such as TNF-alpha, IL-8 and IL-6. This is Interleukin-36 beta from Homo sapiens (Human).